The chain runs to 665 residues: Intraflagellar transport protein 70A (665 aa).

7 TPR repeats span residues 11–44 (DGEFTALVYRLIRDARYAEAVQLLGRELQRSPRS), 45–78 (RAGLSLLGYCYYRLQEFALAAECYEQLGQLHPEL), 154–187 (TDGQVNLGCLLYKEGQYEAACSKFSATLQASGYQ), 189–221 (DLSYNLALAYYSSRQYASALKHIAEIIERGIRQ), 393–424 (LTKQVQEARHNRDDEAIKKAVNEYDETMEKYI), 425–457 (PVLMAQAKIYWNLENYPMVEKVFRKSVEFCNDH), and 459–492 (VWKLNVAHVLFMQENKYKEAIGFYEPIVKKHYDN). The stretch at 508-535 (YIMTSQNEEAEELMRKIEKEEEQLSYDD) forms a coiled coil. The stretch at 544-577 (CIVNLVIGTLYCAKGNYEFGISRVIKSLEPYNKK) is one TPR 8 repeat.

Belongs to the TTC30/dfy-1/fleer family.

It is found in the cell projection. Its subcellular location is the cilium. Its function is as follows. Required for polyglutamylation of axonemal tubulin. Plays a role in anterograde intraflagellar transport (IFT), the process by which cilia precursors are transported from the base of the cilium to the site of their incorporation at the tip. The chain is Intraflagellar transport protein 70A from Homo sapiens (Human).